The primary structure comprises 249 residues: GTP cyclohydrolase 1 type 2 homolog (249 aa).

His64, His65, Asp102, His217, and Glu221 together coordinate a divalent metal cation.

Belongs to the GTP cyclohydrolase I type 2/NIF3 family. Homohexamer.

The protein is GTP cyclohydrolase 1 type 2 homolog of Neisseria meningitidis serogroup B (strain ATCC BAA-335 / MC58).